Here is a 417-residue protein sequence, read N- to C-terminus: Snake venom metalloproteinase kistomin (417 aa).

A signal peptide spans 1 to 20 (MIEVLLVTICLAAFPYQGSS). A propeptide spanning residues 21–189 (IILESGNVND…KKPFRLNLTP (169 aa)) is cleaved from the precursor. The Peptidase M12B domain maps to 197–391 (AKVYLVIVAD…RKPECLFKKP (195 aa)). 3 disulfide bridges follow: Cys308–Cys386, Cys348–Cys370, and Cys350–Cys353. A Zn(2+)-binding site is contributed by His333. The active site involves Glu334. Zn(2+)-binding residues include His337 and His343. Positions 392–417 (LRTDTVSTPVSGNEPLEVITMDDFYA) are excised as a propeptide.

Belongs to the venom metalloproteinase (M12B) family. P-I subfamily. In terms of assembly, monomer. Zn(2+) serves as cofactor. In terms of tissue distribution, expressed by the venom gland.

It localises to the secreted. Its activity is regulated as follows. Inhibited by EDTA, and O-phenanthrolene. In terms of biological role, snake venom zinc metalloprotease that inhibits platelet aggregation by binding specifically to platelet glycoprotein VI (GP6) and platelet glycoprotein Ib alpha (GP1BA). It inhibits the interaction between collagen and platelet GP6 by cleaving GP6 (at '225-Glu-|-Ala-226' and '238-Val-|-Phe-239' bonds), and inhibits vWF-induced platelet aggregation by cleaving GP1BA and vWF. Cleavage of GP1BA occurs at two distinct sites to generate two soluble fragments. It also cleaves alpha- (FGA) and subsequently the gamma-chain (FGG) of fibrinogen, leaving the beta-chain unaffected. It also inhibits collagen-, convulxin- and ristocetin-induced platelet aggregation. It blocks the adhesion of platelet to immobilized collagen, but only exerts a slight inhibition to fibrinogen. In vivo, it exerts potent antithrombotic effect. The sequence is that of Snake venom metalloproteinase kistomin from Calloselasma rhodostoma (Malayan pit viper).